The chain runs to 1541 residues: WD repeat-containing protein 62 (1541 aa).

A2 carries the N-acetylalanine modification. Position 33 is a phosphoserine (S33). A Phosphothreonine modification is found at T46. WD repeat units lie at residues 109 to 150 (TARK…QVAE), 153 to 194 (GHKY…VVAS), 196 to 234 (KVSCRVIALSFSEDSSYFVTVGNRHVRFWFLEVSTEAKV), 291 to 330 (INLKVSLSSCLCVSQELIFCGCTDGIVRIFQAHSLHYLAN), 357 to 396 (AVYPDTVALTFDPNHQWLSCVYKDHSIYIWDVKDINKVGK), 402 to 450 (FHSS…DSHW), 490 to 529 (DMKAGVRVMQVSPDGQHLASGDRSGNLRIHELHFMDELVR), 532 to 574 (AHDA…SLEQ), 578 to 618 (DHSS…DGLH), 626 to 665 (AEKTTLYDMDIDITQKYVAVACQDRNVRVYNTVNGKQKKC), 671 to 713 (GDEG…KMFG), and 714 to 752 (HSEIITGMKFTYDCRHLITVSGDSCVFIWHLGPEITNCM). Phosphoserine is present on S501. Disordered stretches follow at residues 762 to 820 (REQP…KESL) and 911 to 1050 (LSQS…LPQT). The span at 770-780 (KDGKWSRDPRQ) shows a compositional bias: basic and acidic residues. Residues 781–795 (ETCTSMPSEISLSPG) are compositionally biased toward polar residues. The span at 797–809 (QTEDELEEECEPE) shows a compositional bias: acidic residues. One copy of the WD 13 repeat lies at 803–846 (EEECEPEELLKTPSKESLDSDPRCLLTNGKLPLWAKRLLGDDDV). The span at 810 to 820 (ELLKTPSKESL) shows a compositional bias: basic and acidic residues. The segment covering 937–948 (VSELLCSLESEV) has biased composition (low complexity). Position 943 is a phosphoserine (S943). Pro residues predominate over residues 1008-1026 (PPRPDPDPPFDVAVPPAPG). T1050 is modified (phosphothreonine). Residues S1095, S1125, and S1151 each carry the phosphoserine modification. Disordered regions lie at residues 1133-1153 (LAGSQPRAEPLRAGTGYTSPG) and 1185-1212 (SSSSVPPTDKTPPTPTALPTPGLAQGVH). The stretch at 1138-1180 (PRAEPLRAGTGYTSPGRTNVLSAGKAEEPLEAWSPLTSCLTGL) is one WD 14 repeat. Over residues 1193-1202 (DKTPPTPTAL) the composition is skewed to pro residues. S1235, S1255, and S1256 each carry phosphoserine. The disordered stretch occupies residues 1273–1293 (TVTPSSDSEGQEPALPSRGNH). T1275 is modified (phosphothreonine).

Can form homodimers (via C-terminus). Interacts (via C-terminus) with MAPKBP1 (via C-terminus). Interacts with CDK5RAP2, CEP152, CEP63 and KIAA0753. CEP63, CDK5RAP2, CEP152, WDR62 are proposed to form a stepwise assembled complex at the centrosome forming a ring near parental centrioles.

The protein localises to the nucleus. Its subcellular location is the cytoplasm. It localises to the cytoskeleton. The protein resides in the spindle pole. It is found in the microtubule organizing center. The protein localises to the centrosome. Its subcellular location is the centriole. Functionally, required for cerebral cortical development. Plays a role in neuronal proliferation and migration. Plays a role in mother-centriole-dependent centriole duplication; the function seems also to involve CEP152, CDK5RAP2 and CEP63 through a stepwise assembled complex at the centrosome that recruits CDK2 required for centriole duplication. In Sus scrofa (Pig), this protein is WD repeat-containing protein 62 (WDR62).